Consider the following 350-residue polypeptide: Phosphate acyltransferase (350 aa).

Belongs to the PlsX family. As to quaternary structure, homodimer. Probably interacts with PlsY.

The protein localises to the cytoplasm. It catalyses the reaction a fatty acyl-[ACP] + phosphate = an acyl phosphate + holo-[ACP]. It functions in the pathway lipid metabolism; phospholipid metabolism. Catalyzes the reversible formation of acyl-phosphate (acyl-PO(4)) from acyl-[acyl-carrier-protein] (acyl-ACP). This enzyme utilizes acyl-ACP as fatty acyl donor, but not acyl-CoA. This Magnetococcus marinus (strain ATCC BAA-1437 / JCM 17883 / MC-1) protein is Phosphate acyltransferase.